We begin with the raw amino-acid sequence, 306 residues long: 2-phospho-L-lactate transferase (306 aa).

Residue aspartate 48 coordinates 7,8-didemethyl-8-hydroxy-5-deazariboflavin.

This sequence belongs to the CofD family. Homodimer. It depends on Mg(2+) as a cofactor.

The catalysed reaction is (2S)-lactyl-2-diphospho-5'-guanosine + 7,8-didemethyl-8-hydroxy-5-deazariboflavin = oxidized coenzyme F420-0 + GMP + H(+). It functions in the pathway cofactor biosynthesis; coenzyme F420 biosynthesis. In terms of biological role, catalyzes the transfer of the 2-phospholactate moiety from (2S)-lactyl-2-diphospho-5'-guanosine to 7,8-didemethyl-8-hydroxy-5-deazariboflavin (FO) with the formation of oxidized coenzyme F420-0 and GMP. In Methanococcoides burtonii (strain DSM 6242 / NBRC 107633 / OCM 468 / ACE-M), this protein is 2-phospho-L-lactate transferase.